We begin with the raw amino-acid sequence, 301 residues long: Chitosanase (301 aa).

Residues Met1–Ala42 form the signal peptide. The active-site Proton donor is Glu79. Cysteines 92 and 166 form a disulfide. The Nucleophile role is filled by Asp97.

It belongs to the glycosyl hydrolase 46 family.

The protein localises to the secreted. It catalyses the reaction Endohydrolysis of beta-(1-&gt;4)-linkages between D-glucosamine residues in a partly acetylated chitosan.. In terms of biological role, aids in the defense against invading fungal pathogens by degrading their cell wall chitosan. This Niallia circulans (Bacillus circulans) protein is Chitosanase (csn).